The following is a 325-amino-acid chain: Biotin synthase (325 aa).

Residues 36-254 (NEVQLAMLLS…IALARIMFPK (219 aa)) enclose the Radical SAM core domain. [4Fe-4S] cluster-binding residues include C51, C55, and C58. [2Fe-2S] cluster is bound by residues C95, C126, C186, and R258.

It belongs to the radical SAM superfamily. Biotin synthase family. In terms of assembly, homodimer. [4Fe-4S] cluster is required as a cofactor. The cofactor is [2Fe-2S] cluster.

The enzyme catalyses (4R,5S)-dethiobiotin + (sulfur carrier)-SH + 2 reduced [2Fe-2S]-[ferredoxin] + 2 S-adenosyl-L-methionine = (sulfur carrier)-H + biotin + 2 5'-deoxyadenosine + 2 L-methionine + 2 oxidized [2Fe-2S]-[ferredoxin]. Its pathway is cofactor biosynthesis; biotin biosynthesis; biotin from 7,8-diaminononanoate: step 2/2. In terms of biological role, catalyzes the conversion of dethiobiotin (DTB) to biotin by the insertion of a sulfur atom into dethiobiotin via a radical-based mechanism. This Neorickettsia sennetsu (strain ATCC VR-367 / Miyayama) (Ehrlichia sennetsu) protein is Biotin synthase.